We begin with the raw amino-acid sequence, 239 residues long: LRRN4 C-terminal-like protein (239 aa).

Residues 1 to 19 (MLGSLSLLWLAAMTTSLVS) form the signal peptide. Topologically, residues 20–194 (QPQILTLEDY…KFIMPPKPVT (175 aa)) are extracellular. Residues 82–179 (QPEPPRLGEV…EGPENWTGPS (98 aa)) form the Fibronectin type-III domain. Residues Asn-132 and Asn-174 are each glycosylated (N-linked (GlcNAc...) asparagine). A helical membrane pass occupies residues 195 to 215 (LVYAAVGVGTALALLSCAALV). Residues 216–239 (WHFCLRERWGCPRRQGMAQASEAL) are Cytoplasmic-facing.

It is found in the membrane. The polypeptide is LRRN4 C-terminal-like protein (Lrrn4cl) (Mus musculus (Mouse)).